A 99-amino-acid chain; its full sequence is Large ribosomal subunit protein bL28 (99 aa).

Belongs to the bacterial ribosomal protein bL28 family.

The sequence is that of Large ribosomal subunit protein bL28 from Rhodospirillum rubrum (strain ATCC 11170 / ATH 1.1.1 / DSM 467 / LMG 4362 / NCIMB 8255 / S1).